Reading from the N-terminus, the 337-residue chain is Lipoyl synthase (337 aa).

Cys-81, Cys-86, Cys-92, Cys-107, Cys-111, Cys-114, and Ser-323 together coordinate [4Fe-4S] cluster. Residues 93-312 (FSHGTATFMI…EDYGNALGFS (220 aa)) form the Radical SAM core domain.

Belongs to the radical SAM superfamily. Lipoyl synthase family. Requires [4Fe-4S] cluster as cofactor.

Its subcellular location is the cytoplasm. The catalysed reaction is [[Fe-S] cluster scaffold protein carrying a second [4Fe-4S](2+) cluster] + N(6)-octanoyl-L-lysyl-[protein] + 2 oxidized [2Fe-2S]-[ferredoxin] + 2 S-adenosyl-L-methionine + 4 H(+) = [[Fe-S] cluster scaffold protein] + N(6)-[(R)-dihydrolipoyl]-L-lysyl-[protein] + 4 Fe(3+) + 2 hydrogen sulfide + 2 5'-deoxyadenosine + 2 L-methionine + 2 reduced [2Fe-2S]-[ferredoxin]. It functions in the pathway protein modification; protein lipoylation via endogenous pathway; protein N(6)-(lipoyl)lysine from octanoyl-[acyl-carrier-protein]: step 2/2. Its function is as follows. Catalyzes the radical-mediated insertion of two sulfur atoms into the C-6 and C-8 positions of the octanoyl moiety bound to the lipoyl domains of lipoate-dependent enzymes, thereby converting the octanoylated domains into lipoylated derivatives. In Xanthomonas campestris pv. campestris (strain B100), this protein is Lipoyl synthase.